The chain runs to 101 residues: Small ribosomal subunit protein uS14 (101 aa).

It belongs to the universal ribosomal protein uS14 family. As to quaternary structure, part of the 30S ribosomal subunit. Contacts proteins S3 and S10.

Functionally, binds 16S rRNA, required for the assembly of 30S particles and may also be responsible for determining the conformation of the 16S rRNA at the A site. This is Small ribosomal subunit protein uS14 from Chromohalobacter salexigens (strain ATCC BAA-138 / DSM 3043 / CIP 106854 / NCIMB 13768 / 1H11).